The chain runs to 376 residues: Non-structural protein NS2 (376 aa).

A compositionally biased stretch (basic and acidic residues) spans 163-188 (EEREKGAVEQPHKPAFKTERGMNRPD). Residues 163–201 (EEREKGAVEQPHKPAFKTERGMNRPDSDEDQNPAGGVVN) are disordered.

The protein belongs to the orbivirus non-structural protein NS2 family.

In terms of biological role, single-stranded RNA-binding protein. The protein is Non-structural protein NS2 (Segment-8) of Antilocapra americana (Pronghorn).